Consider the following 149-residue polypeptide: Gamma-glutamylaminecyclotransferase (149 aa).

Residue 7-10 coordinates substrate; sequence YGTL. Residue glutamate 82 is the Proton acceptor of the active site.

It belongs to the gamma-glutamylcyclotransferase family. In terms of assembly, monomer.

It catalyses the reaction epsilon-(gamma-L-glutamyl)-L-lysine = 5-oxo-L-proline + L-lysine. In terms of biological role, contributes to degradation of proteins cross-linked by transglutaminases by degrading the cross-link between a lysine and a glutamic acid residue. Catalyzes the formation of 5-oxo-L-proline from L-gamma-glutamyl-L-epsilon-lysine. Inactive with L-gamma-glutamyl-alpha-amino acid substrates such as L-gamma-glutamyl-L-alpha-cysteine and L-gamma-glutamyl-L-alpha-alanine. The chain is Gamma-glutamylaminecyclotransferase (Ggact) from Rattus norvegicus (Rat).